The sequence spans 545 residues: MMGHRPVLVLSQNTKRESGRKVQSGNINAAKTIADIIRTCLGPKSMMKMLLDPMGGIVMTNDGNAILREIQVQHPAAKSMIEISRTQDEEVGDGTTSVIILAGEMLSVAEHFLEQQMHPTVVISAYRKALDDMISTLKKISIPVDTSNRDTMLNIINSSITTKVISRWSSLACNIALDAVKTVQFEENGRKEIDIKKYARVEKIPGGIIEDSCVLRGVMINKDVTHPRMRRYIKNPRIVLLDSSLEYKKGESQTDIEITREEDFTRILQMEEEYIQQLCEDIIQLKPDVVITEKGISDLAQHYLMRANITAIRRVRKTDNNRIARACGARIVSRPEELREEDVGTGAGLLEIKKIGDEYFTFITECKDPKACTILLRGASKEILSEVERNLQDAMQVCRNVLLDPQLVPGGGASEMAVAHALTEKSKAMTGVEQWPYRAVAQALEVIPRTLIQNCGASTIRLLTSLRAKHTQENCETWGVNGETGTLVDMKELGIWEPLAVKLQTYKTAVETAVLLLRIDDIVSGHKKKGDDQSRQGGAPDAGQE.

An N-acetylmethionine modification is found at Met1. A disordered region spans residues 1 to 24 (MMGHRPVLVLSQNTKRESGRKVQS). Phosphoserine is present on Ser11. Lys15 is covalently cross-linked (Glycyl lysine isopeptide (Lys-Gly) (interchain with G-Cter in SUMO2)). ADP is bound at residue Gly42. Gly42 provides a ligand contact to ATP. Asp93 is a Mg(2+) binding site. Gly94, Thr95, Thr96, Ser97, Thr162, and Lys163 together coordinate ADP. ATP contacts are provided by Gly94, Thr95, and Thr96. Ser170 is subject to Phosphoserine. The residue at position 222 (Lys222) is an N6-acetyllysine. 2 positions are modified to phosphoserine: Ser243 and Ser244. Residue Tyr247 is modified to Phosphotyrosine. Residues Lys248 and Lys249 each participate in a glycyl lysine isopeptide (Lys-Gly) (interchain with G-Cter in SUMO2) cross-link. Residue Ser252 is modified to Phosphoserine. Cysteines 366 and 372 form a disulfide. A Glycyl lysine isopeptide (Lys-Gly) (interchain with G-Cter in SUMO2) cross-link involves residue Lys381. Gly411 lines the ADP pocket. Gly411 lines the ATP pocket. A phosphothreonine mark is found at Thr430 and Thr459. Residues Gly482, Glu483, Glu497, and Lys502 each contribute to the ADP site. Gly482 contributes to the ATP binding site. Residue Glu497 participates in ATP binding. Residues 526-545 (HKKKGDDQSRQGGAPDAGQE) form a disordered region.

Belongs to the TCP-1 chaperonin family. In terms of assembly, component of the chaperonin-containing T-complex (TRiC), a hexadecamer composed of two identical back-to-back stacked rings enclosing a protein folding chamber. Each ring is made up of eight different subunits: TCP1/CCT1, CCT2, CCT3, CCT4, CCT5, CCT6A/CCT6, CCT7, CCT8. Interacts with PACRG. Interacts with DNAAF4. Interacts with DLEC1.

The protein localises to the cytoplasm. The catalysed reaction is ATP + H2O = ADP + phosphate + H(+). Functionally, component of the chaperonin-containing T-complex (TRiC), a molecular chaperone complex that assists the folding of actin, tubulin and other proteins upon ATP hydrolysis. The TRiC complex mediates the folding of WRAP53/TCAB1, thereby regulating telomere maintenance. As part of the TRiC complex may play a role in the assembly of BBSome, a complex involved in ciliogenesis regulating transports vesicles to the cilia. In Bos taurus (Bovine), this protein is T-complex protein 1 subunit gamma (CCT3).